Consider the following 324-residue polypeptide: Aquaporin-4 (324 aa).

At 1-36 the chain is on the cytoplasmic side; sequence MSDRPAARPWGKCGSLCRREEIMVAFKGVWTQAFWK. 2 S-palmitoyl cysteine lipidation sites follow: Cys13 and Cys17. The chain crosses the membrane as a helical span at residues 37 to 57; sequence AVTAEFLAMLIFVLLSLGSTI. Over 58–69 the chain is Extracellular; the sequence is NWGGKENPLPVD. Residues 70-89 form a helical membrane-spanning segment; it reads MVLISLCFGLSIATMVQCFG. Residues 90 to 93 lie on the Cytoplasmic side of the membrane; it reads HISG. Residues 94–101 constitute an intramembrane region (discontinuously helical); sequence GHINPAVT. The NPA 1 motif lies at 97–99; it reads NPA. Topologically, residues 102-115 are cytoplasmic; the sequence is VAMVCTRKISIAKS. At Ser111 the chain carries Phosphoserine; by PKG. Residues 116-136 form a helical membrane-spanning segment; it reads VFYIAAQCLGAIIGAGILYLV. The Extracellular segment spans residues 137–155; the sequence is TPPSVVGGLGVTTVHGNLT. N-linked (GlcNAc...) asparagine glycosylation occurs at Asn153. Residues 156–176 form a helical membrane-spanning segment; sequence AGHGLLVELIITFQLVFTIFA. The Cytoplasmic segment spans residues 177–184; that stretch reads SCDSKRTD. Position 180 is a phosphoserine; by PKC (Ser180). Residues 185–205 form a helical membrane-spanning segment; that stretch reads VTGSIALAIGFSVAIGHLFAI. N-linked (GlcNAc...) asparagine glycosylation occurs at Asn206. Residues 206–208 are Extracellular-facing; that stretch reads NYT. The segment at residues 209–222 is an intramembrane region (discontinuously helical); that stretch reads GASMNPARSFGPAV. The short motif at 213–215 is the NPA 2 element; sequence NPA. Topologically, residues 223–231 are extracellular; the sequence is IMGNWENHW. Residues 232-252 traverse the membrane as a helical segment; the sequence is IYWVGPIIGAVLAGGLYEYVF. At 253–324 the chain is on the cytoplasmic side; sequence CPDVELKRRF…PSGEIAQTQH (72 aa). Phosphoserine occurs at positions 276 and 285. Phosphothreonine is present on Thr289. A compositionally biased stretch (basic and acidic residues) spans 305–316; it reads DRGDEKKGKDPS. Residues 305-324 form a disordered region; the sequence is DRGDEKKGKDPSGEIAQTQH.

This sequence belongs to the MIP/aquaporin (TC 1.A.8) family. In terms of assembly, homotetramer. The tetramers can form oligomeric arrays in membranes. The size of the oligomers differs between tissues and is smaller in skeletal muscle than in brain. Interaction between AQP4 oligomeric arrays in close-by cells can contribute to cell-cell adhesion. Part of a complex containing MLC1, TRPV4, HEPACAM and ATP1B1. In terms of processing, phosphorylation by PKC at Ser-180 reduces conductance by 50%. Phosphorylation by PKG at Ser-111 in response to glutamate increases conductance by 40%. Isoform 2: Palmitoylated on its N-terminal region. Isoform 1: Not palmitoylated. In terms of tissue distribution, not expressed in kidney, Detectable in gastric parietal and brain astroglial cells. The absence of AQP4 in kidney may be critical for the extreme urinary concentration that occurs in this species (up to 5,000 mosmol/kg H(2)O).

It is found in the cell membrane. The protein localises to the basolateral cell membrane. The protein resides in the endosome membrane. It localises to the sarcolemma. Its subcellular location is the cell projection. It catalyses the reaction H2O(in) = H2O(out). Its function is as follows. Forms a water-specific channel. Plays an important role in brain water homeostasis and in glymphatic solute transport. Required for a normal rate of water exchange across the blood brain interface. Required for normal levels of cerebrospinal fluid influx into the brain cortex and parenchyma along paravascular spaces that surround penetrating arteries, and for normal drainage of interstitial fluid along paravenous drainage pathways. Thereby, it is required for normal clearance of solutes from the brain interstitial fluid, including soluble beta-amyloid peptides derived from APP. Plays a redundant role in urinary water homeostasis and urinary concentrating ability. This Dipodomys merriami (Merriam's kangaroo rat) protein is Aquaporin-4 (AQP4).